The sequence spans 873 residues: Leucine--tRNA ligase (873 aa).

The 'HIGH' region motif lies at 48 to 58; that stretch reads PYPSGKLHMGH. A 'KMSKS' region motif is present at residues 636–640; that stretch reads KMSKS. ATP is bound at residue lysine 639.

Belongs to the class-I aminoacyl-tRNA synthetase family.

Its subcellular location is the cytoplasm. The catalysed reaction is tRNA(Leu) + L-leucine + ATP = L-leucyl-tRNA(Leu) + AMP + diphosphate. The protein is Leucine--tRNA ligase of Cupriavidus metallidurans (strain ATCC 43123 / DSM 2839 / NBRC 102507 / CH34) (Ralstonia metallidurans).